A 750-amino-acid polypeptide reads, in one-letter code: Serine/threonine-protein kinase PknG (750 aa).

The interval 1-66 (MAKASETERS…PQDRMATTSR (66 aa)) is disordered. Positions 17–34 (ADAQTATSATVRPLSTQA) are enriched in polar residues. The Protein kinase domain maps to 151 to 396 (YEVKGCIAHG…EMSAQLTGVL (246 aa)). ATP contacts are provided by residues 157-165 (IAHGGLGWI) and K181. D276 serves as the catalytic Proton acceptor.

It belongs to the protein kinase superfamily. Ser/Thr protein kinase family. Post-translationally, autophosphorylated.

It catalyses the reaction L-seryl-[protein] + ATP = O-phospho-L-seryl-[protein] + ADP + H(+). It carries out the reaction L-threonyl-[protein] + ATP = O-phospho-L-threonyl-[protein] + ADP + H(+). The polypeptide is Serine/threonine-protein kinase PknG (pknG) (Mycobacterium bovis (strain ATCC BAA-935 / AF2122/97)).